Reading from the N-terminus, the 205-residue chain is MKMMKVMMLIVMMMMVMVMVSEGSIIEPTCKETPDFNLCVSLLNSDPRGSSADTSGLALILIDKIKGLATKTLNEINGLYKKRPELKRALDECSRRYKTILNADVPEAIEAISKGVPKFGEDGVIDAGVEASVCQGGFNGSSPLTSLTKSMQKISNVTRAIFYSNSIVKEEACGSSWPSLALNIDSKACVVSLQNIQFNRGRTCW.

The signal sequence occupies residues 1–23; the sequence is MKMMKVMMLIVMMMMVMVMVSEG. Intrachain disulfides connect Cys30/Cys39 and Cys93/Cys134. Residues Asn139 and Asn156 are each glycosylated (N-linked (GlcNAc...) asparagine).

The protein belongs to the PMEI family. Mostly expressed in roots, senescent leaves and flowers (in sepals), and, to a lower extent, in stems, specifically in the vascular tissues (e.g. in the phloem).

The protein localises to the vacuole. In terms of biological role, inhibits fructosidases from vacuoles (vacuolar invertase VI). The protein is Cell wall / vacuolar inhibitor of fructosidase 1 (C/VIF1) of Arabidopsis thaliana (Mouse-ear cress).